A 55-amino-acid chain; its full sequence is Conotoxin Cal22d (55 aa).

The propeptide occupies Gly1 to Ala5.

In terms of processing, contains 4 disulfide bonds. In terms of tissue distribution, expressed by the venom duct.

Its subcellular location is the secreted. Probable neurotoxin with unknown target. Possibly targets ion channels. This is Conotoxin Cal22d from Californiconus californicus (California cone).